Consider the following 849-residue polypeptide: Thrombospondin type-1 domain-containing protein 1 (849 aa).

A signal peptide spans 1-24 (MKQTLKDFSNLLLVVLCDYVLGEA). Residues 25-413 (EHLVLGEPGH…QPQAPVKSNN (389 aa)) are Extracellular-facing. Residues N39, N50, N55, N66, N77, N106, and N303 are each glycosylated (N-linked (GlcNAc...) asparagine). The 54-residue stretch at 340 to 393 (IETWGLWQPWSQCSASCGDGVRERRRVCLTSSPSRPGCPGMSSETSPCSLEDCA) folds into the TSP type-1 domain. Intrachain disulfides connect C352-C387, C356-C392, and C367-C377. The chain crosses the membrane as a helical span at residues 414–434 (VVTVTGISLCLFIIVATVLIT). The Cytoplasmic portion of the chain corresponds to 435-849 (LWRKLGRAPK…STLSVEKLVI (415 aa)). S463 carries the post-translational modification Phosphoserine. 3 disordered regions span residues 472–516 (SEPR…SESF), 595–799 (KSPF…KCQS), and 828–849 (GYFGSNEEDETTSTLSVEKLVI). Residues 479-493 (SDAGDGPAGSPGDPG) are compositionally biased toward low complexity. Residues 636-651 (SQVRSHSRGSHFRRTA) are compositionally biased toward basic residues. Residues 652–666 (SFHEARQARPFRERS) show a composition bias toward basic and acidic residues. A compositionally biased stretch (pro residues) spans 720 to 732 (SPLPKPHSLGPPP).

In terms of assembly, part of a complex composed of THSD1, PTK2/FAK1, TLN1 and VCL. Interacts with TLN1.

Its subcellular location is the endosome membrane. The protein localises to the cell junction. The protein resides in the focal adhesion. In terms of biological role, is a positive regulator of nascent focal adhesion assembly, involved in the modulation of endothelial cell attachment to the extracellular matrix. The protein is Thrombospondin type-1 domain-containing protein 1 (THSD1) of Bos taurus (Bovine).